Reading from the N-terminus, the 106-residue chain is Small ribosomal subunit protein bS18 (106 aa).

Residues 1–39 (MNGRNNDMGRNGGADYDDRDFGRTPDLNADAPGRRRTGR) are disordered.

This sequence belongs to the bacterial ribosomal protein bS18 family. In terms of assembly, part of the 30S ribosomal subunit. Forms a tight heterodimer with protein bS6.

Binds as a heterodimer with protein bS6 to the central domain of the 16S rRNA, where it helps stabilize the platform of the 30S subunit. The protein is Small ribosomal subunit protein bS18 of Sorangium cellulosum (strain So ce56) (Polyangium cellulosum (strain So ce56)).